A 543-amino-acid polypeptide reads, in one-letter code: 2,3-bisphosphoglycerate-independent phosphoglycerate mutase (543 aa).

The Mn(2+) site is built by aspartate 20 and serine 73. Serine 73 (phosphoserine intermediate) is an active-site residue. Residues histidine 134, 166 to 167, arginine 198, arginine 204, 278 to 281, and lysine 360 contribute to the substrate site; these read RD and RGDR. 5 residues coordinate Mn(2+): aspartate 428, histidine 432, aspartate 469, histidine 470, and histidine 488.

It belongs to the BPG-independent phosphoglycerate mutase family. As to quaternary structure, monomer. Requires Mn(2+) as cofactor.

The catalysed reaction is (2R)-2-phosphoglycerate = (2R)-3-phosphoglycerate. It participates in carbohydrate degradation; glycolysis; pyruvate from D-glyceraldehyde 3-phosphate: step 3/5. Functionally, catalyzes the interconversion of 2-phosphoglycerate and 3-phosphoglycerate. The sequence is that of 2,3-bisphosphoglycerate-independent phosphoglycerate mutase from Rhodopirellula baltica (strain DSM 10527 / NCIMB 13988 / SH1).